Reading from the N-terminus, the 172-residue chain is Adenine phosphoribosyltransferase (172 aa).

The protein belongs to the purine/pyrimidine phosphoribosyltransferase family. In terms of assembly, homodimer.

The protein resides in the cytoplasm. The enzyme catalyses AMP + diphosphate = 5-phospho-alpha-D-ribose 1-diphosphate + adenine. Its pathway is purine metabolism; AMP biosynthesis via salvage pathway; AMP from adenine: step 1/1. Functionally, catalyzes a salvage reaction resulting in the formation of AMP, that is energically less costly than de novo synthesis. The protein is Adenine phosphoribosyltransferase of Staphylococcus haemolyticus (strain JCSC1435).